The primary structure comprises 48 residues: uncharacterized protein (48 aa).

The tract at residues 1–48 (MSRRMGGGMPKINLSGAIPNNNTSTPSTPTLRSSVSVSSSNSRGLFLA) is disordered. Residues 20–48 (NNNTSTPSTPTLRSSVSVSSSNSRGLFLA) show a composition bias toward low complexity.

This is an uncharacterized protein from Dictyostelium discoideum (Social amoeba).